Reading from the N-terminus, the 229-residue chain is tRNA (guanine-N(7)-)-methyltransferase (229 aa).

The S-adenosyl-L-methionine site is built by E62, E87, D114, and D137. Residue D137 is part of the active site. Position 141 (K141) interacts with substrate. An interaction with RNA region spans residues 143–148 (KHNKRR). Residues D173 and 208-211 (TKFE) contribute to the substrate site.

It belongs to the class I-like SAM-binding methyltransferase superfamily. TrmB family.

The enzyme catalyses guanosine(46) in tRNA + S-adenosyl-L-methionine = N(7)-methylguanosine(46) in tRNA + S-adenosyl-L-homocysteine. The protein operates within tRNA modification; N(7)-methylguanine-tRNA biosynthesis. Catalyzes the formation of N(7)-methylguanine at position 46 (m7G46) in tRNA. The protein is tRNA (guanine-N(7)-)-methyltransferase of Francisella philomiragia subsp. philomiragia (strain ATCC 25017 / CCUG 19701 / FSC 153 / O#319-036).